Consider the following 482-residue polypeptide: UDP-N-acetylmuramate--L-alanine ligase (482 aa).

129–135 (GTHGKTT) serves as a coordination point for ATP.

It belongs to the MurCDEF family.

It localises to the cytoplasm. The catalysed reaction is UDP-N-acetyl-alpha-D-muramate + L-alanine + ATP = UDP-N-acetyl-alpha-D-muramoyl-L-alanine + ADP + phosphate + H(+). It participates in cell wall biogenesis; peptidoglycan biosynthesis. Its function is as follows. Cell wall formation. This is UDP-N-acetylmuramate--L-alanine ligase from Acinetobacter baylyi (strain ATCC 33305 / BD413 / ADP1).